Reading from the N-terminus, the 61-residue chain is uncharacterized protein (61 aa).

Residues 24–60 (WMRYESERDEKLRMLERMRDELEAELEEIKREIERLR) adopt a coiled-coil conformation.

This is an uncharacterized protein from Archaeoglobus fulgidus (strain ATCC 49558 / DSM 4304 / JCM 9628 / NBRC 100126 / VC-16).